The primary structure comprises 411 residues: Serine--tRNA ligase (411 aa).

226-228 (TSE) serves as a coordination point for L-serine. ATP is bound at residue 257-259 (RKE). Glu-280 is a binding site for L-serine. Residue 344–347 (EISS) participates in ATP binding. Ser-379 serves as a coordination point for L-serine.

This sequence belongs to the class-II aminoacyl-tRNA synthetase family. Type-1 seryl-tRNA synthetase subfamily. In terms of assembly, homodimer. The tRNA molecule binds across the dimer.

Its subcellular location is the cytoplasm. The enzyme catalyses tRNA(Ser) + L-serine + ATP = L-seryl-tRNA(Ser) + AMP + diphosphate + H(+). The catalysed reaction is tRNA(Sec) + L-serine + ATP = L-seryl-tRNA(Sec) + AMP + diphosphate + H(+). The protein operates within aminoacyl-tRNA biosynthesis; selenocysteinyl-tRNA(Sec) biosynthesis; L-seryl-tRNA(Sec) from L-serine and tRNA(Sec): step 1/1. In terms of biological role, catalyzes the attachment of serine to tRNA(Ser). Is also able to aminoacylate tRNA(Sec) with serine, to form the misacylated tRNA L-seryl-tRNA(Sec), which will be further converted into selenocysteinyl-tRNA(Sec). This chain is Serine--tRNA ligase, found in Campylobacter jejuni subsp. jejuni serotype O:23/36 (strain 81-176).